Here is a 119-residue protein sequence, read N- to C-terminus: MSYIQKQGKNTAWRVALMRNLTSELIVSERLEITETRAKELRKHLDKMVTLAKRGDLHARRQAASWLRNIEASSKEDVLQKLFTTIAKKYKDRDGGYTRILKLDNRKGDNAPMVIIELV.

This sequence belongs to the bacterial ribosomal protein bL17 family. In terms of assembly, part of the 50S ribosomal subunit. Contacts protein L32.

The polypeptide is Large ribosomal subunit protein bL17 (Mesoplasma florum (strain ATCC 33453 / NBRC 100688 / NCTC 11704 / L1) (Acholeplasma florum)).